Consider the following 601-residue polypeptide: Glutathione-regulated potassium-efflux system protein KefB (601 aa).

A run of 13 helical transmembrane segments spans residues 4-24 (SDFLLAGVLFLFAAVAAVPLA), 29-49 (IGAVLGYLLAGIAIGPWGLGF), 55-75 (EILHFSELGVVFLMFIIGLEL), 87-107 (IFGVGAAQVLLSAALLAGLLM), 115-135 (AAVVGGIGLAMSSTAMALQLM), 152-172 (VLLFQDLAVIPALALVPLLAG), 177-197 (HFDWMKIGMKVLAFVGMLIGG), 207-227 (FIAASGVREVFTAATLLLVLG), 230-250 (LFMDALGLSMALGTFIAGVLL), 268-288 (GLLLGLFFISVGMSLNLGVLY), 291-311 (LLWVVISVVVLVAVKILVLYL), 324-344 (MQFAGVLSQGGEFAFVLFSTA), and 356-376 (ALLLVTVTLSMMTTPLLMKLV). The region spanning 400 to 519 (KPQVIVVGFG…AGVTQFSRET (120 aa)) is the RCK N-terminal domain.

This sequence belongs to the monovalent cation:proton antiporter 2 (CPA2) transporter (TC 2.A.37) family. KefB subfamily. As to quaternary structure, interacts with the regulatory subunit KefG.

The protein resides in the cell inner membrane. Functionally, pore-forming subunit of a potassium efflux system that confers protection against electrophiles. Catalyzes K(+)/H(+) antiport. The chain is Glutathione-regulated potassium-efflux system protein KefB from Escherichia coli O139:H28 (strain E24377A / ETEC).